The primary structure comprises 782 residues: Vacuolar import and degradation protein 27 (782 aa).

Ser170, Ser195, and Ser196 each carry phosphoserine. Residues 188–200 (DDDDELDSSSDDF) are compositionally biased toward acidic residues. Positions 188–215 (DDDDELDSSSDDFQDAKDTSFEHEKESE) are disordered. Residues 201–215 (QDAKDTSFEHEKESE) show a composition bias toward basic and acidic residues. Residue Ser222 is modified to Phosphoserine. A compositionally biased stretch (basic and acidic residues) spans 372–384 (DDRSNEERDKESS). The tract at residues 372-422 (DDRSNEERDKESSESENDSEDEDDENDHSKRIISSEAFEEPRRATSKGNSS) is disordered. Positions 385-397 (ESENDSEDEDDEN) are enriched in acidic residues. A Phosphothreonine modification is found at Thr486.

It belongs to the VID27 family.

Its subcellular location is the cytoplasm. Has a role in the negative regulation of gluconeogenesis. Required for vacuolar catabolite degradation of fructose-1,6-bisphosphatase (FBPase). This chain is Vacuolar import and degradation protein 27 (VID27), found in Saccharomyces cerevisiae (strain ATCC 204508 / S288c) (Baker's yeast).